The chain runs to 243 residues: Probable phosphatase CBO3379/CLC_3322 (243 aa).

The Zn(2+) site is built by histidine 8, histidine 10, histidine 16, histidine 41, glutamate 74, histidine 102, histidine 132, aspartate 192, and histidine 194.

The protein belongs to the PHP family. Zn(2+) is required as a cofactor.

This Clostridium botulinum (strain Hall / ATCC 3502 / NCTC 13319 / Type A) protein is Probable phosphatase CBO3379/CLC_3322.